Here is a 404-residue protein sequence, read N- to C-terminus: Probable tRNA sulfurtransferase (404 aa).

A THUMP domain is found at Glu-61–Glu-166. ATP-binding positions include Leu-184–Leu-185, His-209–Phe-210, Arg-266, Gly-288, and Gln-297.

This sequence belongs to the ThiI family.

It is found in the cytoplasm. The catalysed reaction is [ThiI sulfur-carrier protein]-S-sulfanyl-L-cysteine + a uridine in tRNA + 2 reduced [2Fe-2S]-[ferredoxin] + ATP + H(+) = [ThiI sulfur-carrier protein]-L-cysteine + a 4-thiouridine in tRNA + 2 oxidized [2Fe-2S]-[ferredoxin] + AMP + diphosphate. It catalyses the reaction [ThiS sulfur-carrier protein]-C-terminal Gly-Gly-AMP + S-sulfanyl-L-cysteinyl-[cysteine desulfurase] + AH2 = [ThiS sulfur-carrier protein]-C-terminal-Gly-aminoethanethioate + L-cysteinyl-[cysteine desulfurase] + A + AMP + 2 H(+). The protein operates within cofactor biosynthesis; thiamine diphosphate biosynthesis. In terms of biological role, catalyzes the ATP-dependent transfer of a sulfur to tRNA to produce 4-thiouridine in position 8 of tRNAs, which functions as a near-UV photosensor. Also catalyzes the transfer of sulfur to the sulfur carrier protein ThiS, forming ThiS-thiocarboxylate. This is a step in the synthesis of thiazole, in the thiamine biosynthesis pathway. The sulfur is donated as persulfide by IscS. The protein is Probable tRNA sulfurtransferase of Bacillus cereus (strain AH187).